Here is a 383-residue protein sequence, read N- to C-terminus: tRNA-specific 2-thiouridylase MnmA (383 aa).

Residues 9-16 (GMSGGVDS) and Met35 each bind ATP. The interval 95–97 (NPD) is interaction with target base in tRNA. Residue Cys100 is the Nucleophile of the active site. Cys100 and Cys196 are disulfide-bonded. Residue Gly124 coordinates ATP. The tract at residues 146–148 (KDQ) is interaction with tRNA. Cys196 (cysteine persulfide intermediate) is an active-site residue. The tract at residues 308-309 (RY) is interaction with tRNA.

Belongs to the MnmA/TRMU family.

It localises to the cytoplasm. The catalysed reaction is S-sulfanyl-L-cysteinyl-[protein] + uridine(34) in tRNA + AH2 + ATP = 2-thiouridine(34) in tRNA + L-cysteinyl-[protein] + A + AMP + diphosphate + H(+). Its function is as follows. Catalyzes the 2-thiolation of uridine at the wobble position (U34) of tRNA, leading to the formation of s(2)U34. The sequence is that of tRNA-specific 2-thiouridylase MnmA from Burkholderia pseudomallei (strain 668).